We begin with the raw amino-acid sequence, 565 residues long: MNMLIKRVIAIKNPRGDDNNNNKLSDLETLTDKCTTCPLTLMRVMAFFVVSFMLFSVLFSLSVVLRDPPSDAAISSTTTLFQLNQGLGSDDFDSVELLNDKLLGGLLADGFDEKSCLSRYQSAIFGKGLSGKPSSYLISRLRKYEARHKQCGPYTESYNKTVKELGSGQFSESVDCKYVVWISFSGLGNRILTLVSAFLYALLTDRVLLVDPGVDMTDLFCEPFPDASWFVPPDFPLNSHLNNFNQESNQCHGKILKTKSITNSTVPSFVYLHLAHDYDDHDKLFFCDEEQLFLQNVPLLIMKTDNYFIPSLFLMPSFEQELNDLFPKKEKVFHFLGRYLLHPTNNVWGLVVRYYDAYLAKVDERIGIQIRVFDTDPGPFQHVLDQVLACTLKESILPDVNREQNINSSSGTPKSKAVLITSLSSGYFEKVRDMYWEFPTETGEVVGIYQPSHEGYQQTQKQFHNQKAWAEMYLLSLTDVLVTSSWSTFGYVAQGLGGLKPWILYKPENRTAPNPPCQRAMSMEPCFHAPPFYDCKAKRGTDTGALVPHVRHCEDMSWGLKLVDN.

The Cytoplasmic portion of the chain corresponds to 1 to 43; it reads MNMLIKRVIAIKNPRGDDNNNNKLSDLETLTDKCTTCPLTLMR. A helical; Signal-anchor for type II membrane protein membrane pass occupies residues 44–64; that stretch reads VMAFFVVSFMLFSVLFSLSVV. Residues 65 to 565 are Lumenal-facing; that stretch reads LRDPPSDAAI…MSWGLKLVDN (501 aa). N-linked (GlcNAc...) asparagine glycans are attached at residues Asn159, Asn263, Asn407, and Asn509.

It belongs to the glycosyltransferase 37 family.

Its subcellular location is the golgi apparatus. It localises to the golgi stack membrane. The protein operates within protein modification; protein glycosylation. Its function is as follows. Involved in cell wall biosynthesis. Adds the terminal fucosyl residue on xyloglucan side chains. This is Galactoside 2-alpha-L-fucosyltransferase (FT1) from Pisum sativum (Garden pea).